We begin with the raw amino-acid sequence, 581 residues long: Pentatricopeptide repeat-containing protein At3g56550 (581 aa).

9 PPR repeats span residues 70–104 (STSD…SVSR), 106–140 (DLFT…GFLD), 141–171 (DAIV…MPVR), 172–206 (DLVS…GVCG), 207–241 (DSYT…RCES), 242–272 (CVFV…MRKR), 273–307 (DVLT…GVRP), 308–338 (NAIT…MSSQ), and 344–378 (NVKH…EDPV). The tract at residues 379-454 (LWRTLLGSCK…VPGWSWIEIG (76 aa)) is type E motif. Residues 455–485 (DQVHKFVVDDKMHPESAVIYSELGEVINRAI) are type E(+) motif. The interval 486 to 581 (LAGYKPEDSN…DGICSCNDYW (96 aa)) is type DYW motif.

This sequence belongs to the PPR family. PCMP-H subfamily.

In Arabidopsis thaliana (Mouse-ear cress), this protein is Pentatricopeptide repeat-containing protein At3g56550 (PCMP-H80).